The primary structure comprises 469 residues: Neuraminidase (469 aa).

At 1-6 the chain is on the intravirion side; that stretch reads MNPNQK. A helical membrane pass occupies residues 7–29; that stretch reads IITIGSVSLTIATICFLMQIAIQ. Residues 11-33 form an involved in apical transport and lipid raft association region; that stretch reads GSVSLTIATICFLMQIAIQVTTV. Over 30-469 the chain is Virion surface; the sequence is VTTVTLHFKQ…DGADINLMPI (440 aa). The tract at residues 36–88 is hypervariable stalk region; the sequence is HFKQYECDSPANNQVMPCEPIIIERNITEIVYLTNTTIEKEICPKLVEYRNWS. 3 N-linked (GlcNAc...) asparagine; by host glycosylation sites follow: Asn-61, Asn-70, and Asn-86. The segment at 91 to 469 is head of neuraminidase; that stretch reads QCKITGFAPF…DGADINLMPI (379 aa). Intrachain disulfides connect Cys-92–Cys-417, Cys-124–Cys-129, Cys-183–Cys-230, Cys-232–Cys-237, Cys-278–Cys-291, Cys-280–Cys-289, Cys-318–Cys-337, and Cys-421–Cys-447. Arg-118 is a binding site for substrate. Residue Asn-146 is glycosylated (N-linked (GlcNAc...) asparagine; by host). Asp-151 acts as the Proton donor/acceptor in catalysis. A substrate-binding site is contributed by Arg-152. N-linked (GlcNAc...) asparagine; by host glycosylation is found at Asn-200 and Asn-234. Position 276–277 (276–277) interacts with substrate; that stretch reads EE. Residue Arg-292 participates in substrate binding. Asp-293, Gly-297, and Asp-324 together coordinate Ca(2+). Residue Arg-371 participates in substrate binding. N-linked (GlcNAc...) asparagine; by host glycosylation is present at Asn-402. Tyr-406 acts as the Nucleophile in catalysis.

Belongs to the glycosyl hydrolase 34 family. In terms of assembly, homotetramer. Requires Ca(2+) as cofactor. N-glycosylated.

The protein localises to the virion membrane. Its subcellular location is the host apical cell membrane. The enzyme catalyses Hydrolysis of alpha-(2-&gt;3)-, alpha-(2-&gt;6)-, alpha-(2-&gt;8)- glycosidic linkages of terminal sialic acid residues in oligosaccharides, glycoproteins, glycolipids, colominic acid and synthetic substrates.. Inhibited by the neuraminidase inhibitors zanamivir (Relenza) and oseltamivir (Tamiflu). These drugs interfere with the release of progeny virus from infected cells and are effective against all influenza strains. Resistance to neuraminidase inhibitors is quite rare. In terms of biological role, catalyzes the removal of terminal sialic acid residues from viral and cellular glycoconjugates. Cleaves off the terminal sialic acids on the glycosylated HA during virus budding to facilitate virus release. Additionally helps virus spread through the circulation by further removing sialic acids from the cell surface. These cleavages prevent self-aggregation and ensure the efficient spread of the progeny virus from cell to cell. Otherwise, infection would be limited to one round of replication. Described as a receptor-destroying enzyme because it cleaves a terminal sialic acid from the cellular receptors. May facilitate viral invasion of the upper airways by cleaving the sialic acid moieties on the mucin of the airway epithelial cells. Likely to plays a role in the budding process through its association with lipid rafts during intracellular transport. May additionally display a raft-association independent effect on budding. Plays a role in the determination of host range restriction on replication and virulence. Sialidase activity in late endosome/lysosome traffic seems to enhance virus replication. This Aves (whales) protein is Neuraminidase.